The sequence spans 461 residues: DNA polymerase delta subunit 3 (461 aa).

3 disordered regions span residues 148 to 229 (VAQA…SAKG), 249 to 380 (VPGQ…KRVL), and 399 to 461 (YESE…CQKK). Residues 155–172 (ARSSSQTPSDTSAVSTPP) are compositionally biased toward polar residues. A compositionally biased stretch (basic and acidic residues) spans 205-214 (DANKEPKAKE). Over residues 215 to 228 (APSVSAASSKPSAK) the composition is skewed to low complexity. The span at 279 to 304 (KPGRKTEPAKIQQKDKKSKMKRMDKS) shows a compositional bias: basic and acidic residues. A compositionally biased stretch (basic residues) spans 371–380 (GKKRKRKRVL). Positions 427–436 (VKKEPKEERK) are enriched in basic and acidic residues. The PIP-box signature appears at 451–458 (QISIMGFC).

Component of both the DNA polymerase delta and DNA polymerase zeta complexes. The tetrameric DNA polymerase delta complex (Pol-delta4), which consists of POLD1/p125, POLD2/p50, POLD3/p66/p68 and POLD4/p12, with POLD1 bearing DNA polymerase and 3' to 5' proofreading exonuclease activities.

The protein localises to the cytoplasm. It is found in the nucleus. In terms of biological role, accessory component of both the DNA polymerase delta complex and the DNA polymerase zeta complex. As a component of the trimeric and tetrameric DNA polymerase delta complexes (Pol-delta3 and Pol-delta4, respectively), plays a role in high fidelity genome replication, including in lagging strand synthesis, and repair. Required for optimal Pol-delta activity. Stabilizes the Pol-delta complex and plays a major role in Pol-delta stimulation by PCNA. Pol-delta3 and Pol-delta4 are characterized by the absence or the presence of POLD4. They exhibit differences in catalytic activity. Most notably, Pol-delta3 shows higher proofreading activity than Pol-delta4. Although both Pol-delta3 and Pol-delta4 process Okazaki fragments in vitro, Pol-delta3 may also be better suited to fulfill this task, exhibiting near-absence of strand displacement activity compared to Pol-delta4 and stalling on encounter with the 5'-blocking oligonucleotides. Pol-delta3 idling process may avoid the formation of a gap, while maintaining a nick that can be readily ligated. Along with DNA polymerase kappa, DNA polymerase delta carries out approximately half of nucleotide excision repair (NER) synthesis following UV irradiation. In this context, POLD3, along with PCNA and RFC1-replication factor C complex, is required to recruit POLD1, the catalytic subunit of the polymerase delta complex, to DNA damage sites. Under conditions of DNA replication stress, required for the repair of broken replication forks through break-induced replication (BIR). Involved in the translesion synthesis (TLS) of templates carrying O6-methylguanine or abasic sites performed by Pol-delta4, independently of DNA polymerase zeta (REV3L) or eta (POLH). Facilitates abasic site bypass by DNA polymerase delta by promoting extension from the nucleotide inserted opposite the lesion. Also involved in TLS, as a component of the tetrameric DNA polymerase zeta complex. Along with POLD2, dramatically increases the efficiency and processivity of DNA synthesis of the DNA polymerase zeta complex compared to the minimal zeta complex, consisting of only REV3L and REV7. In Gallus gallus (Chicken), this protein is DNA polymerase delta subunit 3 (POLD3).